Reading from the N-terminus, the 572-residue chain is MVNTNNHISEELDKNLDEMEFLKANSDFLRGTIEQSLANPITGSITQDDAKLLKFHGSYMQDDRDLRDERRKQKLEPAYSFMIRVRVPGGKATPEQWIAMDDISNQYANHTIKLTTRQAFQFHGILKRNLKQSMKNINHAVLDSIAACGDVNRNTMCNPNPYQSQVHKEINDYATRISNHLLPRTNAYHEIWLDGEKVLDSSEEKEPIYGNTYLPRKFKIGIAVPPSNDIDVYSQDIGLIAIVEQDELIGFNVTIGGGMGMTHGITETYPQLGRLIGFIPKEKVVDVCEKILTIQRDYGNRENRKNARFKYTVDRLGETWVTEELNRRLGWEIKAPRDFEFEHNGDRLGWIEGINNWNFTLFIQNGRVKDTEDYLLKTALREIAEIHTGDFRLSPNQNLVIANVSPEKKEEIQAIIDKYKLTDGKNYTGLRRNSMACVAFPTCGLAMAESERYLPSLITKIEDLLDESGLKEEEITIRMTGCPNGCARPALAEIAFIGKAPGKYNMYLGGSFKGERLNKIYKENIDENEILESLRPLLLRYSKERLDGEHFGDFVIRDGVIAKVHDGRDFHS.

4 residues coordinate [4Fe-4S] cluster: Cys437, Cys443, Cys482, and Cys486. Siroheme is bound at residue Cys486.

The protein belongs to the nitrite and sulfite reductase 4Fe-4S domain family. In terms of assembly, alpha(8)-beta(8). The alpha component is a flavoprotein, the beta component is a hemoprotein. The cofactor is siroheme. Requires [4Fe-4S] cluster as cofactor.

The enzyme catalyses hydrogen sulfide + 3 NADP(+) + 3 H2O = sulfite + 3 NADPH + 4 H(+). The protein operates within sulfur metabolism; hydrogen sulfide biosynthesis; hydrogen sulfide from sulfite (NADPH route): step 1/1. In terms of biological role, component of the sulfite reductase complex that catalyzes the 6-electron reduction of sulfite to sulfide. This is one of several activities required for the biosynthesis of L-cysteine from sulfate. This chain is Sulfite reductase [NADPH] hemoprotein beta-component, found in Staphylococcus epidermidis (strain ATCC 12228 / FDA PCI 1200).